Consider the following 224-residue polypeptide: uncharacterized protein (224 aa).

G177, I197, and L206 together coordinate S-adenosyl-L-methionine.

Belongs to the class IV-like SAM-binding methyltransferase superfamily. RNA methyltransferase TrmH family.

This is an uncharacterized protein from Archaeoglobus fulgidus (strain ATCC 49558 / DSM 4304 / JCM 9628 / NBRC 100126 / VC-16).